The sequence spans 484 residues: Serine/arginine-rich splicing factor 11 (484 aa).

The segment at 1–33 (MSNTTVVPSTAGPGPSGGPGGGGGGGGGGGGTE) is disordered. Ser2 is subject to N-acetylserine. Residues 14–32 (GPSGGPGGGGGGGGGGGGT) are compositionally biased toward gly residues. The 81-residue stretch at 33-113 (EVIQVTNVSP…ALIVVPYAEG (81 aa)) folds into the RRM domain. Residue Lys197 forms a Glycyl lysine isopeptide (Lys-Gly) (interchain with G-Cter in SUMO2) linkage. At Ser207 the chain carries Phosphoserine. A Glycyl lysine isopeptide (Lys-Gly) (interchain with G-Cter in SUMO2) cross-link involves residue Lys211. Phosphoserine is present on Ser212. The tract at residues 233–484 (ISAAIEPDKK…HHEEDMDMSD (252 aa)) is disordered. Positions 244–308 (EKRRHSRSRS…ERGRRSRSTS (65 aa)) are enriched in basic residues. Tandem repeats lie at residues 247–255 (RHSRSRSRS), 258–265 (RRTPSSSR), 267–274 (RRSRSRSR), 275–282 (RRSHSKSR), 285–292 (RRSKSPRR), 293–300 (RRSHSRER), 302–309 (RRSRSTSK), 321–328 (KRSKTPPK), 334–341 (RRSRSASR), and 346–353 (RRSRSGTR). The segment at 247-353 (RHSRSRSRSR…RRRRSRSGTR (107 aa)) is 10 X 8 AA approximate repeats of R-R-S-R-S-R-S-R. Over residues 309–320 (KTRDKKKEDKEK) the composition is skewed to basic and acidic residues. Ser323 carries the post-translational modification Phosphoserine. Thr325 is modified (phosphothreonine). Positions 334–379 (RRSRSASRERRRRRSRSGTRSPKKPRSPKRKLSRSPSPRRHKKEKK) are enriched in basic residues. 3 stretches are compositionally biased toward basic and acidic residues: residues 380–395 (KDKD…ERST), 402–424 (KDKE…VTRD), and 433–478 (DSEK…HHEE). Phosphoserine is present on residues Ser414 and Ser434. Thr447 carries the post-translational modification Phosphothreonine. 4 positions are modified to phosphoserine: Ser449, Ser456, Ser464, and Ser483.

Belongs to the splicing factor SR family. Interacts with PUF60.

It is found in the nucleus. May function in pre-mRNA splicing. The sequence is that of Serine/arginine-rich splicing factor 11 (SRSF11) from Homo sapiens (Human).